A 339-amino-acid polypeptide reads, in one-letter code: Phenylalanine--tRNA ligase alpha subunit (339 aa).

Position 254 (E254) interacts with Mg(2+).

This sequence belongs to the class-II aminoacyl-tRNA synthetase family. Phe-tRNA synthetase alpha subunit type 1 subfamily. As to quaternary structure, tetramer of two alpha and two beta subunits. Mg(2+) serves as cofactor.

It localises to the cytoplasm. The catalysed reaction is tRNA(Phe) + L-phenylalanine + ATP = L-phenylalanyl-tRNA(Phe) + AMP + diphosphate + H(+). The protein is Phenylalanine--tRNA ligase alpha subunit of Acetivibrio thermocellus (strain ATCC 27405 / DSM 1237 / JCM 9322 / NBRC 103400 / NCIMB 10682 / NRRL B-4536 / VPI 7372) (Clostridium thermocellum).